Reading from the N-terminus, the 606-residue chain is Dihydroxy-acid dehydratase ilvC, mitochondrial (606 aa).

Cys84 contributes to the [2Fe-2S] cluster binding site. Asp116 contributes to the Mg(2+) binding site. Cys157 is a [2Fe-2S] cluster binding site. Asp158 is a binding site for Mg(2+). [2Fe-2S] cluster is bound at residue Cys232. Residue Glu485 coordinates Mg(2+). Ser511 functions as the Proton acceptor in the catalytic mechanism.

It belongs to the IlvD/Edd family. [2Fe-2S] cluster is required as a cofactor. Mg(2+) serves as cofactor.

Its subcellular location is the mitochondrion. It carries out the reaction (2R)-2,3-dihydroxy-3-methylbutanoate = 3-methyl-2-oxobutanoate + H2O. The catalysed reaction is (2R,3R)-2,3-dihydroxy-3-methylpentanoate = (S)-3-methyl-2-oxopentanoate + H2O. It functions in the pathway amino-acid biosynthesis; L-isoleucine biosynthesis; L-isoleucine from 2-oxobutanoate: step 3/4. The protein operates within amino-acid biosynthesis; L-valine biosynthesis; L-valine from pyruvate: step 3/4. With respect to regulation, DHAD activity is inhibited in dose-dependent manner by 2-hydroxy-3-methylbutyric acid with an IC(50) of about 8 mM. Functionally, dihydroxyacid dehydratase that catalyzes the third step in the common pathway leading to biosynthesis of branched-chain amino acids. Catalyzes the dehydration of (2R,3R)-2,3-dihydroxy-3-methylpentanoate (2,3-dihydroxy-3-methylvalerate) into 2-oxo-3-methylpentanoate (2-oxo-3-methylvalerate) and of (2R)-2,3-dihydroxy-3-methylbutanoate (2,3-dihydroxyisovalerate) into 2-oxo-3-methylbutanoate (2-oxoisovalerate), the penultimate precursor to L-isoleucine and L-valine, respectively. IlvC and the branched-chain amino acid biosynthesis are crucial for virulence and may be a potential target to develop antifungal agents. In Aspergillus fumigatus (strain ATCC MYA-4609 / CBS 101355 / FGSC A1100 / Af293) (Neosartorya fumigata), this protein is Dihydroxy-acid dehydratase ilvC, mitochondrial.